Consider the following 570-residue polypeptide: Sulfite reductase [NADPH] hemoprotein beta-component (570 aa).

Residues Cys434, Cys440, Cys479, and Cys483 each contribute to the [4Fe-4S] cluster site. Residue Cys483 coordinates siroheme.

The protein belongs to the nitrite and sulfite reductase 4Fe-4S domain family. Alpha(8)-beta(8). The alpha component is a flavoprotein, the beta component is a hemoprotein. Siroheme is required as a cofactor. [4Fe-4S] cluster serves as cofactor.

It catalyses the reaction hydrogen sulfide + 3 NADP(+) + 3 H2O = sulfite + 3 NADPH + 4 H(+). The protein operates within sulfur metabolism; hydrogen sulfide biosynthesis; hydrogen sulfide from sulfite (NADPH route): step 1/1. In terms of biological role, component of the sulfite reductase complex that catalyzes the 6-electron reduction of sulfite to sulfide. This is one of several activities required for the biosynthesis of L-cysteine from sulfate. The protein is Sulfite reductase [NADPH] hemoprotein beta-component of Escherichia coli O9:H4 (strain HS).